Here is a 919-residue protein sequence, read N- to C-terminus: Hyphally regulated cell wall protein 1 (919 aa).

Positions 1–20 (MKVVSNFIFTILLTLNLSAA) are cleaved as a signal peptide. A glycan (N-linked (GlcNAc...) asparagine) is linked at Asn236. Residues 332-483 (SAPESESDLN…QSITSSPGQS (152 aa)) form a disordered region. Residues 344–392 (TTSSIETSSYSSAATESSVVSESSSAVDSLTSSSLSSKSESSDVVSSTT) are compositionally biased toward low complexity. Over residues 393–414 (NIESSSTAIETTMNSESSTDAG) the composition is skewed to polar residues. The segment covering 415–475 (SSSISQSESS…SNALSSTEQS (61 aa)) has biased composition (low complexity). N-linked (GlcNAc...) asparagine glycans are attached at residues Asn449, Asn488, Asn580, Asn585, Asn607, Asn619, Asn631, Asn639, Asn647, and Asn693. Residues 567–590 (DATTTTTTSTGGDNSTGGNESGSN) are compositionally biased toward low complexity. The disordered stretch occupies residues 567 to 839 (DATTTTTTST…VANPVTTSTE (273 aa)). Gly residues-rich tracts occupy residues 607–665 (NGSG…GSGS) and 675–707 (EGSG…GSGS). The span at 708–724 (QSGSESGSNSGSNEGSN) shows a compositional bias: low complexity. The span at 725-783 (PGAGNGSNEGSGQGSGNGSEAGSGQGSGPNNGSGSGHNDGSGSGSNQGSNPGAGSGSGS) shows a compositional bias: gly residues. Asn729, Asn741, and Asn755 each carry an N-linked (GlcNAc...) asparagine glycan. Low complexity predominate over residues 784–798 (ESGSNAGSHSGSNEG). The span at 799–811 (AKTDSIEGFHTES) shows a compositional bias: basic and acidic residues. A compositionally biased stretch (polar residues) spans 823–833 (ATVTGNSVANP). 2 N-linked (GlcNAc...) asparagine glycosylation sites follow: Asn879 and Asn895. A lipid anchor (GPI-anchor amidated asparagine) is attached at Asn895. A propeptide spans 896–919 (GSSIVTGGKSILFGLIVSMVVLFM) (removed in mature form).

Belongs to the HYR1/IFF family. As to quaternary structure, component of a multiprotein complex of 250 kDa composed of at least HYR1, MP65, and PRA1. In terms of processing, the GPI-anchor is attached to the protein in the endoplasmic reticulum and serves to target the protein to the cell surface. There, the glucosamine-inositol phospholipid moiety is cleaved off and the GPI-modified mannoprotein is covalently attached via its lipidless GPI glycan remnant to the 1,6-beta-glucan of the outer cell wall layer.

Its subcellular location is the secreted. It localises to the cell wall. The protein localises to the membrane. Its function is as follows. GPI-anchored hyphal cell wall protein required for hyphal growth and virulence. Involved in innate immune cell evasion through conferring resistance to neutrophil killing. Binds kininogen, the proteinaceous kinin precursor, and contributes to trigger the kinin-forming cascade on the cell surface. Production of kinins is often involved in the human host defense against microbial infections. This Candida albicans (strain SC5314 / ATCC MYA-2876) (Yeast) protein is Hyphally regulated cell wall protein 1 (HYR1).